Reading from the N-terminus, the 134-residue chain is DNA-directed RNA polymerase subunit omega (134 aa).

It belongs to the RNA polymerase subunit omega family. As to quaternary structure, the RNAP catalytic core consists of 2 alpha, 1 beta, 1 beta' and 1 omega subunit. When a sigma factor is associated with the core the holoenzyme is formed, which can initiate transcription.

It carries out the reaction RNA(n) + a ribonucleoside 5'-triphosphate = RNA(n+1) + diphosphate. In terms of biological role, promotes RNA polymerase assembly. Latches the N- and C-terminal regions of the beta' subunit thereby facilitating its interaction with the beta and alpha subunits. The chain is DNA-directed RNA polymerase subunit omega from Brucella anthropi (strain ATCC 49188 / DSM 6882 / CCUG 24695 / JCM 21032 / LMG 3331 / NBRC 15819 / NCTC 12168 / Alc 37) (Ochrobactrum anthropi).